Here is a 125-residue protein sequence, read N- to C-terminus: Small ribosomal subunit protein uS11 (125 aa).

The tract at residues 101 to 125 (KDVKDVTPTPHNGTRPPKKILKREK) is disordered. Residues 116 to 125 (PPKKILKREK) show a composition bias toward basic residues.

The protein belongs to the universal ribosomal protein uS11 family. In terms of assembly, part of the 30S ribosomal subunit. Interacts with proteins S7 and S18. Binds to IF-3.

In terms of biological role, located on the platform of the 30S subunit, it bridges several disparate RNA helices of the 16S rRNA. Forms part of the Shine-Dalgarno cleft in the 70S ribosome. This Mycoplasma sp protein is Small ribosomal subunit protein uS11.